Here is a 406-residue protein sequence, read N- to C-terminus: Cysteine--tRNA ligase (406 aa).

Cysteine 16 provides a ligand contact to Zn(2+). Positions 18–28 (PTVYSDVHIGN) match the 'HIGH' region motif. Residues cysteine 192, histidine 218, and glutamate 222 each contribute to the Zn(2+) site. The 'KMSKS' region motif lies at 250-254 (KMAKS). Lysine 253 provides a ligand contact to ATP.

Belongs to the class-I aminoacyl-tRNA synthetase family. As to quaternary structure, monomer. It depends on Zn(2+) as a cofactor.

It is found in the cytoplasm. The catalysed reaction is tRNA(Cys) + L-cysteine + ATP = L-cysteinyl-tRNA(Cys) + AMP + diphosphate. The chain is Cysteine--tRNA ligase from Mesomycoplasma hyopneumoniae (strain J / ATCC 25934 / NCTC 10110) (Mycoplasma hyopneumoniae).